Reading from the N-terminus, the 278-residue chain is MDTYMVVGNPIAQSKSPLIHTMFAAQTEQQLEYSRQLLEPGEFDAAAKTFFAGQGKGINITMPFKQDAYNFADELSPRALSAGAVNTLIKREDGSILGENTDGVGLINDITDNLNWTLSGRKVLIVGAGGAVGGILLPLMEQNPAEVLIVNRTASKAEELAARFASMGNIRGAGYGELSAAEGGSCSAFDVIINGTSTSLTGDLPPIPPAVITNTSCVYDMVYGAEPTPFMVWAQNHGAAATADGLGMLVGQAAESFYLWRGIRPDIAPVMAALRQSQ.

Residues 14 to 16 (SKS) and threonine 61 each bind shikimate. Residue lysine 65 is the Proton acceptor of the active site. 2 residues coordinate shikimate: asparagine 86 and aspartate 102. NADP(+)-binding positions include 127–131 (GAGGA), 151–156 (NRTASK), and methionine 221. Tyrosine 223 serves as a coordination point for shikimate. Residue glycine 245 coordinates NADP(+).

The protein belongs to the shikimate dehydrogenase family. In terms of assembly, homodimer.

It catalyses the reaction shikimate + NADP(+) = 3-dehydroshikimate + NADPH + H(+). It functions in the pathway metabolic intermediate biosynthesis; chorismate biosynthesis; chorismate from D-erythrose 4-phosphate and phosphoenolpyruvate: step 4/7. Involved in the biosynthesis of the chorismate, which leads to the biosynthesis of aromatic amino acids. Catalyzes the reversible NADPH linked reduction of 3-dehydroshikimate (DHSA) to yield shikimate (SA). This Saccharophagus degradans (strain 2-40 / ATCC 43961 / DSM 17024) protein is Shikimate dehydrogenase (NADP(+)).